The primary structure comprises 333 residues: Meiotic recombination protein rec24 (333 aa).

The protein belongs to the MEI4L family. As to quaternary structure, interacts with Rec7, as part of the meiotic recombination initiation complex.

It is found in the cytoplasm. It localises to the nucleus. Functionally, required for correct meiotic chromosome segregation and recombination. Accessory protein required for Rec12 activity, which is involved in formation of the double-strand breaks (DSBs) that initiate meiotic recombination. The polypeptide is Meiotic recombination protein rec24 (rec24) (Schizosaccharomyces pombe (strain 972 / ATCC 24843) (Fission yeast)).